The primary structure comprises 126 residues: Fluoride-specific ion channel FluC (126 aa).

Transmembrane regions (helical) follow at residues 7–27, 36–56, 74–94, and 98–118; these read LWLALGGAVGAVCRQAAVLLL, FPAAVLLINVLGSFLLGLTLA, GVLGAFTTFSTFSTELDGLLL, and GGLALAYAALSVGLGLTAAVA. 2 residues coordinate Na(+): G77 and T80.

Belongs to the fluoride channel Fluc/FEX (TC 1.A.43) family.

Its subcellular location is the cell membrane. The enzyme catalyses fluoride(in) = fluoride(out). With respect to regulation, na(+) is not transported, but it plays an essential structural role and its presence is essential for fluoride channel function. Its function is as follows. Fluoride-specific ion channel. Important for reducing fluoride concentration in the cell, thus reducing its toxicity. The polypeptide is Fluoride-specific ion channel FluC (Deinococcus radiodurans (strain ATCC 13939 / DSM 20539 / JCM 16871 / CCUG 27074 / LMG 4051 / NBRC 15346 / NCIMB 9279 / VKM B-1422 / R1)).